The chain runs to 100 residues: Aspartyl/glutamyl-tRNA(Asn/Gln) amidotransferase subunit C (100 aa).

The protein belongs to the GatC family. Heterotrimer of A, B and C subunits.

It carries out the reaction L-glutamyl-tRNA(Gln) + L-glutamine + ATP + H2O = L-glutaminyl-tRNA(Gln) + L-glutamate + ADP + phosphate + H(+). The catalysed reaction is L-aspartyl-tRNA(Asn) + L-glutamine + ATP + H2O = L-asparaginyl-tRNA(Asn) + L-glutamate + ADP + phosphate + 2 H(+). Its function is as follows. Allows the formation of correctly charged Asn-tRNA(Asn) or Gln-tRNA(Gln) through the transamidation of misacylated Asp-tRNA(Asn) or Glu-tRNA(Gln) in organisms which lack either or both of asparaginyl-tRNA or glutaminyl-tRNA synthetases. The reaction takes place in the presence of glutamine and ATP through an activated phospho-Asp-tRNA(Asn) or phospho-Glu-tRNA(Gln). This is Aspartyl/glutamyl-tRNA(Asn/Gln) amidotransferase subunit C from Streptococcus pyogenes serotype M18 (strain MGAS8232).